The following is a 257-amino-acid chain: Zinc import ATP-binding protein ZnuC (257 aa).

In terms of domain architecture, ABC transporter spans 6–221 (IRLDQVGVTF…PAFVELFGKT (216 aa)). 38 to 45 (GPNGAGKT) serves as a coordination point for ATP.

The protein belongs to the ABC transporter superfamily. Zinc importer (TC 3.A.1.15.5) family. The complex is composed of two ATP-binding proteins (ZnuC), two transmembrane proteins (ZnuB) and a solute-binding protein (ZnuA).

It is found in the cell inner membrane. It carries out the reaction Zn(2+)(out) + ATP(in) + H2O(in) = Zn(2+)(in) + ADP(in) + phosphate(in) + H(+)(in). Its function is as follows. Part of the ABC transporter complex ZnuABC involved in zinc import. Responsible for energy coupling to the transport system. In Pseudomonas putida (strain ATCC 47054 / DSM 6125 / CFBP 8728 / NCIMB 11950 / KT2440), this protein is Zinc import ATP-binding protein ZnuC.